Consider the following 58-residue polypeptide: Ribosome modulation factor (58 aa).

Belongs to the ribosome modulation factor family.

The protein localises to the cytoplasm. During stationary phase, converts 70S ribosomes to an inactive dimeric form (100S ribosomes). This Shewanella amazonensis (strain ATCC BAA-1098 / SB2B) protein is Ribosome modulation factor.